The following is a 164-amino-acid chain: Ribosome-binding factor A (164 aa).

Residues 123 to 164 are disordered; it reads ARDLGVPPSGEDDGDDEADDEDDDGGEEGPGAAAPPPADEGR. The span at 132–149 shows a compositional bias: acidic residues; sequence GEDDGDDEADDEDDDGGE. Pro residues predominate over residues 155-164; it reads AAPPPADEGR.

This sequence belongs to the RbfA family. As to quaternary structure, monomer. Binds 30S ribosomal subunits, but not 50S ribosomal subunits or 70S ribosomes.

The protein resides in the cytoplasm. In terms of biological role, one of several proteins that assist in the late maturation steps of the functional core of the 30S ribosomal subunit. Associates with free 30S ribosomal subunits (but not with 30S subunits that are part of 70S ribosomes or polysomes). Required for efficient processing of 16S rRNA. May interact with the 5'-terminal helix region of 16S rRNA. This is Ribosome-binding factor A from Rhodospirillum rubrum (strain ATCC 11170 / ATH 1.1.1 / DSM 467 / LMG 4362 / NCIMB 8255 / S1).